We begin with the raw amino-acid sequence, 473 residues long: Photosystem II CP43 reaction center protein (473 aa).

Residues 1 to 14 (MKILYSLRRFYHVE) constitute a propeptide that is removed on maturation. Threonine 15 carries the post-translational modification N-acetylthreonine. Position 15 is a phosphothreonine (threonine 15). The next 5 helical transmembrane spans lie at 69 to 93 (LFEV…PHLA), 134 to 155 (LLGP…KDRN), 178 to 200 (KALY…RKIT), 255 to 275 (KPFA…LSYS), and 291 to 312 (WFNN…ASQA). Glutamate 367 contributes to the [CaMn4O5] cluster binding site. Residues 447-471 (RARAAAAGFEKGIDRDLEPVLFMTP) traverse the membrane as a helical segment.

This sequence belongs to the PsbB/PsbC family. PsbC subfamily. PSII is composed of 1 copy each of membrane proteins PsbA, PsbB, PsbC, PsbD, PsbE, PsbF, PsbH, PsbI, PsbJ, PsbK, PsbL, PsbM, PsbT, PsbX, PsbY, PsbZ, Psb30/Ycf12, at least 3 peripheral proteins of the oxygen-evolving complex and a large number of cofactors. It forms dimeric complexes. The cofactor is Binds multiple chlorophylls and provides some of the ligands for the Ca-4Mn-5O cluster of the oxygen-evolving complex. It may also provide a ligand for a Cl- that is required for oxygen evolution. PSII binds additional chlorophylls, carotenoids and specific lipids..

Its subcellular location is the plastid. It is found in the chloroplast thylakoid membrane. One of the components of the core complex of photosystem II (PSII). It binds chlorophyll and helps catalyze the primary light-induced photochemical processes of PSII. PSII is a light-driven water:plastoquinone oxidoreductase, using light energy to abstract electrons from H(2)O, generating O(2) and a proton gradient subsequently used for ATP formation. The protein is Photosystem II CP43 reaction center protein of Lemna minor (Common duckweed).